A 56-amino-acid polypeptide reads, in one-letter code: UPF0434 protein CBUD_1597.1 (56 aa).

It belongs to the UPF0434 family.

This is UPF0434 protein CBUD_1597.1 from Coxiella burnetii (strain Dugway 5J108-111).